Consider the following 649-residue polypeptide: Protein PSK SIMULATOR 3 (649 aa).

Glycine 2 carries the N-myristoyl glycine lipid modification. The disordered stretch occupies residues 18 to 43; the sequence is SGSSVADDGREPDFGHSQPNGQTSLI.

The protein localises to the nucleus. Promotes plant growth, especially at the vegetative stage, probably via the regulation of phytosulfokine (PSK) signaling; PSK are peptide phytohormones acting as growth factors. Together with PSI2 and PSI3, required during vegetative growth and reproduction. May also have a function in carbohydrate metabolism. The polypeptide is Protein PSK SIMULATOR 3 (Arabidopsis thaliana (Mouse-ear cress)).